A 1077-amino-acid chain; its full sequence is Response regulator SSK1 (1077 aa).

In terms of domain architecture, Response regulatory spans 854-1000; it reads NVLIVEDNII…FLERKVMEWG (147 aa). 4-aspartylphosphate is present on Asp-903.

Belongs to the SSK1 family.

It localises to the cytoplasm. Functionally, two-domain response regulator protein in the two-component signal transduction system of the HOG1 pathway. Involved in multi-stress responses and is essential for conidiation, secondary metabolism, autophagy and endocyrosis. In addition, regulates mycelial growth, cell nucleus development, septum formation, and organelle development. Also regulates trap formation and thus plays a crucial role in pathogenicity. The sequence is that of Response regulator SSK1 from Arthrobotrys oligospora (strain ATCC 24927 / CBS 115.81 / DSM 1491) (Nematode-trapping fungus).